The sequence spans 169 residues: MFGKLLPCAILVWCLFSLGQARQEETVEECERNIPASLKGRVCELRQYTPVQGKDMDSHMQCVLEVLGFVEDNGELVFQELLGVLKMVDPDGDHASSMKKCNAEAEKVDTSSKANTFYTCFLGTSSAQAFKYAVDYVELLRAGKLDMGTTFNAGQVSALMKQIDDGLCN.

The first 21 residues, 1–21, serve as a signal peptide directing secretion; that stretch reads MFGKLLPCAILVWCLFSLGQA. 3 cysteine pairs are disulfide-bonded: cysteine 30-cysteine 62, cysteine 43-cysteine 168, and cysteine 101-cysteine 120. Noradrenaline is bound by residues glutamate 31 and arginine 46. Glutamate 31 contacts serotonin. The serotonin site is built by histidine 59, tyrosine 118, aspartate 135, and glutamate 138. Histamine is bound by residues tyrosine 118, aspartate 135, and glutamate 138. 2 residues coordinate noradrenaline: aspartate 135 and glutamate 138.

This sequence belongs to the PBP/GOBP family. In terms of tissue distribution, female saliva (at protein level). Female salivary gland. Low-level expression in female carcass without salivary glands. Not detected in male tissues.

The protein resides in the secreted. Modulates blood feeding of female mosquitoes on vertebrate species by binding and sequestering different mediators involved in the host response. Binds serotonin, noradrenaline, histamine and adrenaline. Inhibits histamine-, serotonin- and noradrenaline-induced smooth muscle contraction. Exhibits vasodilating activity. The protein is Short form salivary protein D7R3 of Anopheles gambiae (African malaria mosquito).